The sequence spans 232 residues: Dysfunctional anti-sigma-K factor RskA (232 aa).

Residues 1-90 are Cytoplasmic-facing; sequence MTEHTDFELL…EVRRQSRWRT (90 aa). Residues 91 to 111 form a helical membrane-spanning segment; it reads AAFASAAAIAVGLGAFDLGVL. The Extracellular portion of the chain corresponds to 112–232; that stretch reads TRPSPPPTVA…GTILAELPLG (121 aa).

This sequence belongs to the anti-sigma-K factor family.

The protein resides in the cell membrane. Functionally, an anti-sigma factor for extracytoplasmic function (ECF) sigma factor SigK. ECF sigma factors are held in an inactive form by an anti-sigma factor until released by regulated intramembrane proteolysis (RIP). However, in M.bovis this protein is probably dysfunctional, due to at least 1 of the 2 naturally occurring polymorphisms in its gene, when compared to M.tuberculosis. This leads to an increased expression of SigK-regulated genes, such as mpb70 and mpb83. RIP occurs when an extracytoplasmic signal triggers a concerted proteolytic cascade to transmit information and elicit cellular responses. The membrane-spanning regulatory substrate protein is first cut extracytoplasmically (site-1 protease, S1P), then within the membrane itself (site-2 protease, S2P, Rip1), while cytoplasmic proteases finish degrading the regulatory protein, liberating the sigma factor. This Mycobacterium bovis (strain ATCC BAA-935 / AF2122/97) protein is Dysfunctional anti-sigma-K factor RskA (rskA).